The sequence spans 199 residues: Inactive glutathione S-transferase D3 (199 aa).

Residues 1–64 (MVGKALGLEF…YLVEKYGKDD (64 aa)) enclose the GST N-terminal domain. Glutathione-binding positions include 34 to 36 (HSI) and 48 to 50 (ESR). A GST C-terminal domain is found at 70-199 (DIQKQAVINQ…RIEEKQNAAK (130 aa)).

This sequence belongs to the GST superfamily. Delta family. Homodimer.

Its function is as follows. Has no glutathione S-transferase activity. The protein is Inactive glutathione S-transferase D3 of Drosophila melanogaster (Fruit fly).